A 330-amino-acid chain; its full sequence is Ketol-acid reductoisomerase (NADP(+)) (330 aa).

Positions M1–T181 constitute a KARI N-terminal Rossmann domain. NADP(+)-binding positions include Y24 to Q27, R47, S52, and D82 to Q85. H107 is an active-site residue. G133 lines the NADP(+) pocket. The KARI C-terminal knotted domain maps to T182 to E327. Mg(2+) is bound by residues D190, E194, E226, and E230. Substrate is bound at residue S251.

The protein belongs to the ketol-acid reductoisomerase family. Requires Mg(2+) as cofactor.

The catalysed reaction is (2R)-2,3-dihydroxy-3-methylbutanoate + NADP(+) = (2S)-2-acetolactate + NADPH + H(+). It catalyses the reaction (2R,3R)-2,3-dihydroxy-3-methylpentanoate + NADP(+) = (S)-2-ethyl-2-hydroxy-3-oxobutanoate + NADPH + H(+). The protein operates within amino-acid biosynthesis; L-isoleucine biosynthesis; L-isoleucine from 2-oxobutanoate: step 2/4. Its pathway is amino-acid biosynthesis; L-valine biosynthesis; L-valine from pyruvate: step 2/4. Functionally, involved in the biosynthesis of branched-chain amino acids (BCAA). Catalyzes an alkyl-migration followed by a ketol-acid reduction of (S)-2-acetolactate (S2AL) to yield (R)-2,3-dihydroxy-isovalerate. In the isomerase reaction, S2AL is rearranged via a Mg-dependent methyl migration to produce 3-hydroxy-3-methyl-2-ketobutyrate (HMKB). In the reductase reaction, this 2-ketoacid undergoes a metal-dependent reduction by NADPH to yield (R)-2,3-dihydroxy-isovalerate. The chain is Ketol-acid reductoisomerase (NADP(+)) from Methanococcus maripaludis (strain C6 / ATCC BAA-1332).